We begin with the raw amino-acid sequence, 798 residues long: Phenylalanine--tRNA ligase beta subunit (798 aa).

Residues 39–148 (SKHLGGFVVG…VTLAVGASLL (110 aa)) enclose the tRNA-binding domain. A B5 domain is found at 401 to 476 (DWQKSIVLRP…RINGYDNIPA (76 aa)). Residues Asp-454, Asp-460, Glu-463, and Glu-464 each coordinate Mg(2+). An FDX-ACB domain is found at 704–797 (SALQPLDRDF…VAKATGGELR (94 aa)).

This sequence belongs to the phenylalanyl-tRNA synthetase beta subunit family. Type 1 subfamily. Tetramer of two alpha and two beta subunits. It depends on Mg(2+) as a cofactor.

It is found in the cytoplasm. It carries out the reaction tRNA(Phe) + L-phenylalanine + ATP = L-phenylalanyl-tRNA(Phe) + AMP + diphosphate + H(+). The protein is Phenylalanine--tRNA ligase beta subunit of Paramagnetospirillum magneticum (strain ATCC 700264 / AMB-1) (Magnetospirillum magneticum).